The sequence spans 522 residues: Maturase K (522 aa).

The protein belongs to the intron maturase 2 family. MatK subfamily.

The protein localises to the plastid. It is found in the chloroplast. Functionally, usually encoded in the trnK tRNA gene intron. Probably assists in splicing its own and other chloroplast group II introns. This is Maturase K from Iris domestica (Leopard lily).